We begin with the raw amino-acid sequence, 701 residues long: MNPVIKKFQFGQSTVTLETGRIARQATGAVLVTVDNDVTVLVTVVGAKQADPGKGFFPLSVHYQEKTYAAGKIPGGFFKREGRPSEKETLTSRLIDRPIRPLFPEGFMNEVQVVCTVVSTSKKTDPDIAAMIGTSAALAISGIPFEGPIGAARVAFHESTGYLLNPTYEQLAASSLDMVVAGTSDAVLMVESEAQELTEDQMLGAVLFAHDEFQAVIQAVKELAAEAGKPTWDWKPAVANTELFNAIRAEFGEAVSQGYTITVKADRYARLGELRDQAIAKFSGEEGQPSASEVKEIFGEIEYRTVRENIVNGKPRIDGRDTKTVRPLNIEVGVLPKTHGSALFTRGETQALVVATLGTARDAQLLDTLEGEKKDPFMLHYNFPPFSVGECGRMGGAGRREIGHGRLARRSVQAMLPAADVFPYTIRVVSEITESNGSSSMASVCGASLALMDAGVPMKAPVAGIAMGLVKEGEKFAVLTDILGDEDHLGDMDFKVAGTAKGVTALQMDIKINGITEEIMEIALGQALEARLNILGQMNQIIGQSRTELSANAPTMIAMKIDTDKIRDVIGKGGATIRAICEETKASIDIEDDGSIKIFGETKEAAEAARQRVLGITAEAEIGKIYVGKVERIVDFGAFVNILPGKDGLVHISMLSDARVEKVTDILKEGQEVEVLVLDVDNRGRIKLSIKDVAAAKASGV.

Mg(2+)-binding residues include aspartate 487 and aspartate 493. One can recognise a KH domain in the interval 554-613 (PTMIAMKIDTDKIRDVIGKGGATIRAICEETKASIDIEDDGSIKIFGETKEAAEAARQRV). In terms of domain architecture, S1 motif spans 623-691 (GKIYVGKVER…NRGRIKLSIK (69 aa)).

It belongs to the polyribonucleotide nucleotidyltransferase family. In terms of assembly, component of the RNA degradosome, which is a multiprotein complex involved in RNA processing and mRNA degradation. Mg(2+) is required as a cofactor.

The protein localises to the cytoplasm. It carries out the reaction RNA(n+1) + phosphate = RNA(n) + a ribonucleoside 5'-diphosphate. Involved in mRNA degradation. Catalyzes the phosphorolysis of single-stranded polyribonucleotides processively in the 3'- to 5'-direction. The sequence is that of Polyribonucleotide nucleotidyltransferase from Pseudomonas putida (strain W619).